The chain runs to 420 residues: UDP-N-acetyl-D-mannosamine dehydrogenase (420 aa).

NAD(+) contacts are provided by Tyr-13, Ile-14, Asp-33, Thr-85, and Thr-126. UDP-N-acetyl-alpha-D-mannosaminouronate contacts are provided by Arg-160, Val-161, Lys-212, Asn-216, Arg-219, His-250, Arg-252, and Gly-263. Lys-212 functions as the Proton donor/acceptor in the catalytic mechanism. The active-site Nucleophile is the Cys-266. The UDP-N-acetyl-alpha-D-mannosaminouronate site is built by Phe-330 and Lys-331. Arg-338 is an NAD(+) binding site. Lys-416 lines the UDP-N-acetyl-alpha-D-mannosaminouronate pocket.

Belongs to the UDP-glucose/GDP-mannose dehydrogenase family. WecC subfamily. Homodimer.

The enzyme catalyses UDP-N-acetyl-alpha-D-mannosamine + 2 NAD(+) + H2O = UDP-N-acetyl-alpha-D-mannosaminouronate + 2 NADH + 3 H(+). Its pathway is bacterial outer membrane biogenesis; enterobacterial common antigen biosynthesis. Its function is as follows. Catalyzes the four-electron oxidation of UDP-N-acetyl-D-mannosamine (UDP-ManNAc), reducing NAD(+) and releasing UDP-N-acetylmannosaminuronic acid (UDP-ManNAcA). The polypeptide is UDP-N-acetyl-D-mannosamine dehydrogenase (Shigella flexneri).